The following is a 341-amino-acid chain: Paired box protein Pax-9 (341 aa).

The segment at residues 4–130 is a DNA-binding region (paired); it reads AFGEVNQLGG…SSISRILRNK (127 aa). Residues 7-63 form a PAI subdomain region; that stretch reads EVNQLGGVFVNGRPLPNAIRLRIVELAQLGIRPCDISRQLRVSHGCVSKILARYNET. The tract at residues 82 to 130 is RED subdomain; it reads TVVKHIRTYKQRDPGIFAWEIRDRLLADGVCDKYNVPSVSSISRILRNK. The interaction with KDM5B stretch occupies residues 168–189; sequence AAAAKVPTPPGVPAIPGSVAMP.

Interacts with KDM5B.

The protein resides in the nucleus. Transcription factor required for normal development of thymus, parathyroid glands, ultimobranchial bodies, teeth, skeletal elements of skull and larynx as well as distal limbs. The protein is Paired box protein Pax-9 (PAX9) of Saimiri boliviensis boliviensis (Bolivian squirrel monkey).